The primary structure comprises 419 residues: MNIFDELKARGLVFQTTDEAALSKALTEDMVSYYVGYDPTADSLHLGNLVLILTMKRLQMAGHKPYALVGGATGLIGDPSFKDSERSLQTKDTVTKWSGKIRSQLERFLDFENGENKAEMTNNYNWFENLTFIDFLRDVGKHFTVNYMISKDSVKSRMESGISYTEFAYQIMQGYDFYELNQLHNVTLQLGGSDQWGNMTAGTELLRRKANKQGHVITIPLITDSTGKKFGKSEGNAIWLDADKTSPYEMYQFWLNVDDADAVKMLKIFTFLSLEEIAEIEEQFEAARHERLAQKVLAREVVSLVHGKEAYEQAVKTSEILFGGGDLRQLDAKSILTGLKAAPQHQIAPDEDLTLIELLISVGIAPSKRQAREDITNGAIYINGERVQELDYVLTDSDKIENRLTVIRRGKKKNFVLTY.

L-tyrosine is bound at residue Y34. The short motif at 39–48 is the 'HIGH' region element; sequence PTADSLHLGN. 2 residues coordinate L-tyrosine: Y169 and Q173. The short motif at 229-233 is the 'KMSKS' region element; that stretch reads KFGKS. K232 serves as a coordination point for ATP. Positions 353–419 constitute an S4 RNA-binding domain; that stretch reads LTLIELLISV…GKKKNFVLTY (67 aa).

Belongs to the class-I aminoacyl-tRNA synthetase family. TyrS type 1 subfamily. Homodimer.

Its subcellular location is the cytoplasm. It carries out the reaction tRNA(Tyr) + L-tyrosine + ATP = L-tyrosyl-tRNA(Tyr) + AMP + diphosphate + H(+). Functionally, catalyzes the attachment of tyrosine to tRNA(Tyr) in a two-step reaction: tyrosine is first activated by ATP to form Tyr-AMP and then transferred to the acceptor end of tRNA(Tyr). In Lactococcus lactis subsp. cremoris (strain MG1363), this protein is Tyrosine--tRNA ligase.